The following is a 310-amino-acid chain: UPF0761 membrane protein VFMJ11_0098 (310 aa).

6 helical membrane passes run 34 to 54, 97 to 117, 136 to 156, 178 to 198, 207 to 227, and 242 to 262; these read YMAYITLLSLVPLITVLLSVL, MTAVGSGFLFVASVMLISSID, FSLYWMILTLGPLLVGASLAA, LLGWLPIILSFSAFVGLYLLV, HALIGAMSAGCLFEFSKVGFA, and ALAAVPILFVWVYLCWIIVLI.

The protein belongs to the UPF0761 family.

The protein localises to the cell inner membrane. This is UPF0761 membrane protein VFMJ11_0098 from Aliivibrio fischeri (strain MJ11) (Vibrio fischeri).